We begin with the raw amino-acid sequence, 290 residues long: Ciliary microtubule inner protein 6 (290 aa).

Positions 76 to 112 are disordered; that stretch reads ENQGDWWPHGKGLENPFQPPYDTKSTQRSDFKKPTCP. Mn stretches follow at residues 128 to 160 and 213 to 246; these read GIVP…ARKT and SAES…IRVA. Positions 197–228 are disordered; it reads SGSCSSEQSKKTEKGNSAESKMISPGLCRQNS.

Its subcellular location is the cell projection. It localises to the cilium. The polypeptide is Ciliary microtubule inner protein 6 (CIMIP6) (Bos taurus (Bovine)).